The following is a 384-amino-acid chain: Early estrogen-induced gene 1 protein (384 aa).

One can recognise a C2 NT-type domain in the interval A2–L145. The tract at residues N129–K138 is required for interaction with TNFRSF11A/RANK. The interval L173–H315 is disordered. Residues G183–S193 show a composition bias toward low complexity. The segment covering S227–D254 has biased composition (polar residues). 2 stretches are compositionally biased toward basic and acidic residues: residues G280–P292 and H299–H315.

This sequence belongs to the EEIG family. As to quaternary structure, part of a complex composed of EEIG1, TNFRSF11A/RANK, PLCG2, GAB2, TEC and BTK; complex formation increases in the presence of TNFSF11/RANKL. Interacts with PRDM1/BLIMP1; following TNFSF11/RANKL stimulation in bone marrow-derived macrophages, the interaction promotes the binding of PRDM1/BLIMP1 to the gene promoter of IRF8.

It is found in the nucleus. Its subcellular location is the cytoplasm. The protein resides in the membrane raft. Functionally, key component of TNFSF11/RANKL- and TNF-induced osteoclastogenesis pathways, thereby mediates bone resorption in pathological bone loss conditions. Required for TNFSF11/RANKL-induced osteoclastogenesis via its interaction with TNFRSF11A/RANK, thereby facilitates the downsteam transcription of NFATC1 and activation of PLCG2. Facilitates recruitment of the transcriptional repressor PRDM1/BLIMP1 to the promoter of the anti-osteoclastogenesis gene IRF8, thereby resulting in transcription of osteoclast differentiation factors. May play a role in estrogen action. The chain is Early estrogen-induced gene 1 protein from Homo sapiens (Human).